Consider the following 296-residue polypeptide: Coiled-coil domain-containing protein 69 (296 aa).

Residues 1 to 18 (MGCRHSRLSSCKPPKKKR) are compositionally biased toward basic residues. Residues 1–41 (MGCRHSRLSSCKPPKKKRQEPEPEQPPRPEPHELGPLNGDT) form a disordered region. The N-myristoyl glycine moiety is linked to residue glycine 2. The span at 19–33 (QEPEPEQPPRPEPHE) shows a compositional bias: basic and acidic residues. Positions 48 to 272 (CASEEAERHQ…QEKEELLYRV (225 aa)) form a coiled coil. Serine 154 and serine 241 each carry phosphoserine.

It belongs to the CCDC69 family. In terms of tissue distribution, highly expressed in duodenum, esophagus, pancreas, prostate, salivary gland, thymus and urinary bladder.

Its subcellular location is the cytoplasm. The protein resides in the cytoskeleton. It localises to the spindle. It is found in the midbody. May act as a scaffold to regulate the recruitment and assembly of spindle midzone components. Required for the localization of AURKB and PLK1 to the spindle midzone. This Homo sapiens (Human) protein is Coiled-coil domain-containing protein 69.